A 643-amino-acid polypeptide reads, in one-letter code: Transcription elongation factor B polypeptide 3 (643 aa).

One can recognise a TFIIS N-terminal domain in the interval 9–82 (DVVRHYQRSI…TKWKAMVAKE (74 aa)). 2 disordered regions span residues 86 to 289 (IAST…MGAN) and 302 to 351 (SSKK…SKKP). Residues 94 to 106 (HNEEDSGKTKSSD) are compositionally biased toward basic and acidic residues. Residues 114–124 (KGGNSSSGEDL) are compositionally biased toward polar residues. S120 bears the Phosphoserine mark. Residues 127-136 (SKHKSKHAKS) show a composition bias toward basic residues. Basic and acidic residues-rich tracts occupy residues 164–198 (HDKS…KDSS) and 207–237 (SKSE…VKDK). Basic residues predominate over residues 238 to 255 (SSKHKSSSSKSSKRSHSP). The span at 302–336 (SSKKSSSNSKSKFVAKPTAAPSSSALSAPTTAGSS) shows a compositional bias: low complexity. The tract at residues 413–571 (AQGISSKTMR…PPRSVQRKQE (159 aa)) is activation domain. Residues 439 to 448 (SLFDLCTRVL) form an interacting with Elongin BC complex region.

Its subcellular location is the nucleus. Functionally, SIII, also known as elongin, is a general transcription elongation factor that increases the RNA polymerase II transcription elongation past template-encoded arresting sites. Subunit A is transcriptionally active and its transcription activity is strongly enhanced by binding to the dimeric complex of the SIII regulatory subunits B and C (elongin BC complex). May play an important role in metamorphosis. The chain is Transcription elongation factor B polypeptide 3 (EloA) from Drosophila melanogaster (Fruit fly).